Here is a 171-residue protein sequence, read N- to C-terminus: uncharacterized protein (171 aa).

The first 20 residues, 1-20 (MRRVLFSCFCGLLWSSSGWA), serve as a signal peptide directing secretion. Cysteines 40 and 80 form a disulfide.

The protein belongs to the fimbrial protein family.

The protein localises to the fimbrium. Its function is as follows. Part of the sfmACDHF fimbrial operon. Could contribute to adhesion to various surfaces in specific environmental niches. Increases adhesion to eukaryotic T24 bladder epithelial cells in the absence of fim genes. This is an uncharacterized protein from Escherichia coli (strain K12).